We begin with the raw amino-acid sequence, 464 residues long: Methionine aminopeptidase 2-2 (464 aa).

The interval 1–106 is disordered; the sequence is MGAKTYEGGD…PRVPLSQLFP (106 aa). Residues 37–53 are compositionally biased toward acidic residues; the sequence is EDGDGEFGSDDDDDGGD. The span at 70–86 shows a compositional bias: basic residues; sequence PKKKKRSKKKKNNKKKS. Position 216 (histidine 216) interacts with substrate. 3 residues coordinate a divalent metal cation: aspartate 237, aspartate 248, and histidine 317. A substrate-binding site is contributed by histidine 325. Positions 350 and 445 each coordinate a divalent metal cation.

It belongs to the peptidase M24A family. Methionine aminopeptidase eukaryotic type 2 subfamily. It depends on Co(2+) as a cofactor. Requires Zn(2+) as cofactor. Mn(2+) serves as cofactor. Fe(2+) is required as a cofactor.

It is found in the cytoplasm. The enzyme catalyses Release of N-terminal amino acids, preferentially methionine, from peptides and arylamides.. Functionally, cotranslationally removes the N-terminal methionine from nascent proteins. The N-terminal methionine is often cleaved when the second residue in the primary sequence is small and uncharged (Met-Ala-, Cys, Gly, Pro, Ser, Thr, or Val). This Talaromyces stipitatus (strain ATCC 10500 / CBS 375.48 / QM 6759 / NRRL 1006) (Penicillium stipitatum) protein is Methionine aminopeptidase 2-2.